The following is a 267-amino-acid chain: tRNA pseudouridine synthase A (267 aa).

The active-site Nucleophile is Asp51. Tyr109 contacts substrate.

It belongs to the tRNA pseudouridine synthase TruA family. As to quaternary structure, homodimer.

The enzyme catalyses uridine(38/39/40) in tRNA = pseudouridine(38/39/40) in tRNA. In terms of biological role, formation of pseudouridine at positions 38, 39 and 40 in the anticodon stem and loop of transfer RNAs. The polypeptide is tRNA pseudouridine synthase A (Staphylococcus epidermidis (strain ATCC 12228 / FDA PCI 1200)).